A 511-amino-acid polypeptide reads, in one-letter code: Potassium voltage-gated channel subfamily A member 10 (511 aa).

A disordered region spans residues E25 to S44. A helical membrane pass occupies residues V218–L238. A helical transmembrane segment spans residues F271 to V292. C293 carries S-palmitoyl cysteine lipidation. Residues I303–L323 form a helical membrane-spanning segment. The helical; Voltage-sensor transmembrane segment at I339 to S358 threads the bilayer. A helical membrane pass occupies residues L375 to F395. The short motif at T421 to D426 is the Selectivity filter element. Residues I436–I456 form a helical membrane-spanning segment. Positions S489–K511 are disordered.

The protein belongs to the potassium channel family. A (Shaker) (TC 1.A.1.2) subfamily. Kv1.8/KCNA10 sub-subfamily. In terms of assembly, homotetramer. Interacts with KCN4B/POMP. Interaction with KCN4B/POMP is necessary for the modulation of channel activity by cAMP. As to expression, expressed strongly in the inner ear and weakly in skeletal muscle. Not detected in other tissues.

The protein resides in the membrane. The catalysed reaction is K(+)(in) = K(+)(out). With respect to regulation, the channel activity is up-regulated by cAMP. In terms of biological role, voltage-gated potassium ion channel that mediates K(+) permeability of excitable membranes. When opened in response to the voltage difference across the membrane, KCNA10 channel selectively allows the flow of potassium ions across the membrane down their electrochemical gradient. The chain is Potassium voltage-gated channel subfamily A member 10 from Mus musculus (Mouse).